The sequence spans 358 residues: Peptide chain release factor 1 (358 aa).

Gln235 is subject to N5-methylglutamine.

This sequence belongs to the prokaryotic/mitochondrial release factor family. Post-translationally, methylated by PrmC. Methylation increases the termination efficiency of RF1.

Its subcellular location is the cytoplasm. In terms of biological role, peptide chain release factor 1 directs the termination of translation in response to the peptide chain termination codons UAG and UAA. In Neisseria gonorrhoeae (strain NCCP11945), this protein is Peptide chain release factor 1.